The chain runs to 223 residues: Type II restriction enzyme BglII (223 aa).

The Mg(2+) site is built by aspartate 84 and valine 94.

Homodimer. The cofactor is Mg(2+).

It catalyses the reaction Endonucleolytic cleavage of DNA to give specific double-stranded fragments with terminal 5'-phosphates.. In terms of biological role, a P subtype restriction enzyme that recognizes the double-stranded sequence 5'-AGATCT-3' and cleaves after A-1. This Bacillus subtilis protein is Type II restriction enzyme BglII (bglIIR).